We begin with the raw amino-acid sequence, 131 residues long: Hydrogenase maturation factor HypA (131 aa).

H2 is a Ni(2+) binding site. Zn(2+) is bound by residues C73, C76, C105, and C108.

It belongs to the HypA/HybF family.

Functionally, involved in the maturation of [NiFe] hydrogenases. Required for nickel insertion into the metal center of the hydrogenase. The sequence is that of Hydrogenase maturation factor HypA from Thermomicrobium roseum (strain ATCC 27502 / DSM 5159 / P-2).